The following is a 460-amino-acid chain: Trigger factor (460 aa).

The region spanning 166–245 (DDFLTIDITA…VKAVKERELP (80 aa)) is the PPIase FKBP-type domain. A disordered region spans residues 434-460 (AAEEAAAGEANEEADVVASDDPAAVKF). The span at 449 to 460 (VVASDDPAAVKF) shows a compositional bias: low complexity.

This sequence belongs to the FKBP-type PPIase family. Tig subfamily.

It localises to the cytoplasm. The enzyme catalyses [protein]-peptidylproline (omega=180) = [protein]-peptidylproline (omega=0). In terms of biological role, involved in protein export. Acts as a chaperone by maintaining the newly synthesized protein in an open conformation. Functions as a peptidyl-prolyl cis-trans isomerase. In Paenarthrobacter aurescens (strain TC1), this protein is Trigger factor.